Reading from the N-terminus, the 118-residue chain is MSDKEFMWALKNGDLDEVKDYVAKGEDVNRTLEGGRKPLHYAADCGQLEILEFLLLKGADINAPDKHNITPLLSAVYEGHVSCVKLLLSKGADKTVKGPDGLTAFEATDNQAIKTLLQ.

ANK repeat units lie at residues 1–30, 34–65, and 67–98; these read MSDK…DVNR, GGRK…NAPD, and HNIT…TVKG.

The protein belongs to the myotrophin family.

Its subcellular location is the cytoplasm. It localises to the nucleus. It is found in the perinuclear region. Its function is as follows. Regulates NF-kappa-B transcription factor activity. Promotes growth of cardiomyocytes, but not cardiomyocyte proliferation. Promotes cardiac muscle hypertrophy. Plays a role in the regulation of the growth of actin filaments. Inhibits the activity of the F-actin-capping protein complex. This Gallus gallus (Chicken) protein is Myotrophin (MTPN).